The chain runs to 141 residues: 3-hydroxyacyl-[acyl-carrier-protein] dehydratase FabZ (141 aa).

His49 is an active-site residue.

This sequence belongs to the thioester dehydratase family. FabZ subfamily.

It localises to the cytoplasm. The enzyme catalyses a (3R)-hydroxyacyl-[ACP] = a (2E)-enoyl-[ACP] + H2O. Functionally, involved in unsaturated fatty acids biosynthesis. Catalyzes the dehydration of short chain beta-hydroxyacyl-ACPs and long chain saturated and unsaturated beta-hydroxyacyl-ACPs. This chain is 3-hydroxyacyl-[acyl-carrier-protein] dehydratase FabZ, found in Clostridium acetobutylicum (strain ATCC 824 / DSM 792 / JCM 1419 / IAM 19013 / LMG 5710 / NBRC 13948 / NRRL B-527 / VKM B-1787 / 2291 / W).